Reading from the N-terminus, the 40-residue chain is Toxin CSTX-17 (40 aa).

4 disulfide bridges follow: cysteine 2/cysteine 17, cysteine 9/cysteine 22, cysteine 16/cysteine 33, and cysteine 24/cysteine 31. Tryptophan 40 carries the post-translational modification Tryptophan amide.

Post-translationally, contains 4 disulfide bonds. In terms of tissue distribution, expressed by the venom gland.

It localises to the secreted. This Cupiennius salei (American wandering spider) protein is Toxin CSTX-17.